A 198-amino-acid polypeptide reads, in one-letter code: Integrator complex subunit 8-like protein (198 aa).

This sequence belongs to the Integrator subunit 8 family. In terms of assembly, component of the Integrator complex. The core complex associates with protein phosphatase 2A subunits, to form the Integrator-PP2A (INTAC) complex.

It is found in the nucleus. It localises to the chromosome. Functionally, component of the integrator complex, a multiprotein complex that terminates RNA polymerase II (Pol II) transcription in the promoter-proximal region of genes. The integrator complex provides a quality checkpoint during transcription elongation by driving premature transcription termination of transcripts that are unfavorably configured for transcriptional elongation: the complex terminates transcription by (1) catalyzing dephosphorylation of the C-terminal domain (CTD) of Pol II subunit polr2a, (2) degrading the exiting nascent RNA transcript via endonuclease activity and (3) promoting the release of Pol II from bound DNA. The integrator complex is also involved in terminating the synthesis of non-coding Pol II transcripts, such as enhancer RNAs (eRNAs), small nuclear RNAs (snRNAs), telomerase RNAs and long non-coding RNAs (lncRNAs). Within the integrator complex, INTS8 is required for the recruitment of protein phosphatase 2A (PP2A) to transcription pause-release checkpoint. This Dictyostelium discoideum (Social amoeba) protein is Integrator complex subunit 8-like protein.